Here is a 448-residue protein sequence, read N- to C-terminus: Methylenetetrahydrofolate--tRNA-(uracil-5-)-methyltransferase TrmFO (448 aa).

13-18 serves as a coordination point for FAD; the sequence is GAGLAG.

The protein belongs to the MnmG family. TrmFO subfamily. It depends on FAD as a cofactor.

Its subcellular location is the cytoplasm. It carries out the reaction uridine(54) in tRNA + (6R)-5,10-methylene-5,6,7,8-tetrahydrofolate + NADH + H(+) = 5-methyluridine(54) in tRNA + (6S)-5,6,7,8-tetrahydrofolate + NAD(+). It catalyses the reaction uridine(54) in tRNA + (6R)-5,10-methylene-5,6,7,8-tetrahydrofolate + NADPH + H(+) = 5-methyluridine(54) in tRNA + (6S)-5,6,7,8-tetrahydrofolate + NADP(+). In terms of biological role, catalyzes the folate-dependent formation of 5-methyl-uridine at position 54 (M-5-U54) in all tRNAs. The protein is Methylenetetrahydrofolate--tRNA-(uracil-5-)-methyltransferase TrmFO of Streptococcus pyogenes serotype M5 (strain Manfredo).